We begin with the raw amino-acid sequence, 276 residues long: Caspase-6 (276 aa).

Positions 1 to 5 are excised as a propeptide; the sequence is MTETD. A tri-arginine exosite region spans residues 25–27; that stretch reads KRR. At Ser62 the chain carries Phosphoserine. Residue His104 is part of the active site. The segment at 108-125 is 130's region; the sequence is NHVYAYDAKIEIQTLTGL. Cys146 is an active-site residue. The propeptide occupies 163–175; sequence HQTDKLDNVTQVD. Ser239 carries the post-translational modification Phosphoserine. Residues Cys246 and Cys259 are each lipidated (S-palmitoyl cysteine).

The protein belongs to the peptidase C14A family. In terms of assembly, heterotetramer that consists of two anti-parallel arranged heterodimers, each one formed by a 18 kDa (p18) and a 11 kDa (p11) subunit. Interacts with BIRC6/bruce. Interacts with RIPK3. As to quaternary structure, heterotetramer that consists of two anti-parallel arranged heterodimers, each one formed by a 18 kDa (Caspase-6 subunit p18) and a 11 kDa (Caspase-6 subunit p11) subunit. Phosphorylated by NUAK1; phosphorylation inhibits self-activation. Phosphorylation at Ser-239 by AMP-activated protein kinase (PRKAA1 or PRKAA2) inhibits autocleavage, preventing caspase activation, thereby preventing hepatocyte apoptosis. Post-translationally, palmitoylation by ZDHHC17 blocks dimerization and subsequent activation, leading to inhibit the cysteine protease activity. In terms of processing, can be cleaved and activated by different caspases, depending on the context. Cleaved and activated by caspase-8 (CASP8) and subsequently by caspase-3 (CASP3). Can also undergo autoactivation by mediating autocleavage at Asp-162 and Asp-175, while it is not able to cleave its N-terminal disordered prodomain. Cleaved and activated by CASP1, possibly in the context of inflammation. As to expression, highly expressed in lung, liver, kidney, testis, and heart. Lower levels in spleen, skeletal muscle and brain. Expressed in neurons.

Its subcellular location is the cytoplasm. It localises to the nucleus. The catalysed reaction is Strict requirement for Asp at position P1 and has a preferred cleavage sequence of Val-Glu-His-Asp-|-.. During activation, the N-terminal disordered prodomain is removed by cleavage. Concomitantly, double cleavage gives rise to a large 18-kDa and a small 11-kDa subunit. The two large and two small subunits then assemble to form the active CASP6 complex. Can be cleaved and activated by different caspases, depending on the context. Cleaved and activated by caspase-8 (CASP8) and subsequently by caspase-3 (CASP3). Can also undergo autoactivation by mediating autocleavage at Asp-162 and Asp-175, while it is not able to cleave its N-terminal disordered prodomain. Intramolecular cleavage at Asp-175 is a prerequisite for CASP6 self-activation. Cleaved and activated by CASP1 in neurons, possibly in the context of inflammation. Phosphorylation at Ser-239 inhibits autocleavage, preventing caspase activation. Functionally, cysteine protease that plays essential roles in programmed cell death, axonal degeneration, development and innate immunity. Acts as a non-canonical executioner caspase during apoptosis: localizes in the nucleus and cleaves the nuclear structural protein NUMA1 and lamin A/LMNA thereby inducing nuclear shrinkage and fragmentation. Lamin-A/LMNA cleavage is required for chromatin condensation and nuclear disassembly during apoptotic execution. Acts as a regulator of liver damage by promoting hepatocyte apoptosis: in absence of phosphorylation by AMP-activated protein kinase (AMPK), catalyzes cleavage of BID, leading to cytochrome c release, thereby participating in nonalcoholic steatohepatitis. Cleaves PARK7/DJ-1 in cells undergoing apoptosis. Involved in intrinsic apoptosis by mediating cleavage of RIPK1. Furthermore, cleaves many transcription factors such as NF-kappa-B and cAMP response element-binding protein/CREBBP. Cleaves phospholipid scramblase proteins XKR4 and XKR9. In addition to apoptosis, involved in different forms of programmed cell death. Plays an essential role in defense against viruses by acting as a central mediator of the ZBP1-mediated pyroptosis, apoptosis, and necroptosis (PANoptosis), independently of its cysteine protease activity. PANoptosis is a unique inflammatory programmed cell death, which provides a molecular scaffold that allows the interactions and activation of machinery required for inflammasome/pyroptosis, apoptosis and necroptosis. Mechanistically, interacts with RIPK3 and enhances the interaction between RIPK3 and ZBP1, leading to ZBP1-mediated inflammasome activation and cell death. Plays an essential role in axon degeneration during axon pruning which is the remodeling of axons during neurogenesis but not apoptosis. Regulates B-cell programs both during early development and after antigen stimulation. Its function is as follows. (Microbial infection) Proteolytically cleaves the N protein of coronaviruses. The cleavage leads to two fragments and modulates coronavirus replication by regulating IFN signaling. The two fragments produced by the cleavage interact with IRF3 inhibiting its nuclear translocation after activation and reduce the expression of IFNB and IFN-stimulated genes. This is Caspase-6 from Mus musculus (Mouse).